The sequence spans 184 residues: NADH-quinone oxidoreductase subunit B 1 (184 aa).

Residues cysteine 37, cysteine 38, cysteine 103, and cysteine 132 each coordinate [4Fe-4S] cluster.

It belongs to the complex I 20 kDa subunit family. In terms of assembly, NDH-1 is composed of 14 different subunits. Subunits NuoB, C, D, E, F, and G constitute the peripheral sector of the complex. [4Fe-4S] cluster serves as cofactor.

It localises to the cell membrane. The enzyme catalyses a quinone + NADH + 5 H(+)(in) = a quinol + NAD(+) + 4 H(+)(out). In terms of biological role, NDH-1 shuttles electrons from NADH, via FMN and iron-sulfur (Fe-S) centers, to quinones in the respiratory chain. The immediate electron acceptor for the enzyme in this species is believed to be a menaquinone. Couples the redox reaction to proton translocation (for every two electrons transferred, four hydrogen ions are translocated across the cytoplasmic membrane), and thus conserves the redox energy in a proton gradient. The sequence is that of NADH-quinone oxidoreductase subunit B 1 from Streptomyces coelicolor (strain ATCC BAA-471 / A3(2) / M145).